The following is a 207-amino-acid chain: 8-oxoguanine DNA glycosylase/AP lyase (207 aa).

Active-site residues include K129 and D147.

This sequence belongs to the type-2 OGG1 family.

It catalyses the reaction 2'-deoxyribonucleotide-(2'-deoxyribose 5'-phosphate)-2'-deoxyribonucleotide-DNA = a 3'-end 2'-deoxyribonucleotide-(2,3-dehydro-2,3-deoxyribose 5'-phosphate)-DNA + a 5'-end 5'-phospho-2'-deoxyribonucleoside-DNA + H(+). Catalyzes the excision of an oxidatively damaged form of guanine (7,8-dihydro-8-oxoguanine = 8-oxoG) from DNA. Also cleaves the DNA backbone at apurinic/apyrimidinic sites (AP sites). In Thermotoga maritima (strain ATCC 43589 / DSM 3109 / JCM 10099 / NBRC 100826 / MSB8), this protein is 8-oxoguanine DNA glycosylase/AP lyase.